The following is a 548-amino-acid chain: Chaperonin GroEL (548 aa).

Residues 30-33 (TLGP), lysine 51, 87-91 (DGTTT), glycine 415, and 479-481 (NAV) each bind ATP.

The protein belongs to the chaperonin (HSP60) family. Forms a cylinder of 14 subunits composed of two heptameric rings stacked back-to-back. Interacts with the co-chaperonin GroES.

It localises to the cytoplasm. The catalysed reaction is ATP + H2O + a folded polypeptide = ADP + phosphate + an unfolded polypeptide.. In terms of biological role, together with its co-chaperonin GroES, plays an essential role in assisting protein folding. The GroEL-GroES system forms a nano-cage that allows encapsulation of the non-native substrate proteins and provides a physical environment optimized to promote and accelerate protein folding. In Stenotrophomonas maltophilia (Pseudomonas maltophilia), this protein is Chaperonin GroEL.